A 640-amino-acid polypeptide reads, in one-letter code: Threonine--tRNA ligase (640 aa).

The TGS domain maps to 1–60 (MKITFPDGAVKEFEPGVSTADIAASISPGLKKKALAGKLNGELLDLVTPIHEDGAIEIVT). The segment at 241-538 (DHRKLGKELD…LIEEYKGAFP (298 aa)) is catalytic. Residues C334, H385, and H515 each coordinate Zn(2+).

The protein belongs to the class-II aminoacyl-tRNA synthetase family. Homodimer. The cofactor is Zn(2+).

It localises to the cytoplasm. The enzyme catalyses tRNA(Thr) + L-threonine + ATP = L-threonyl-tRNA(Thr) + AMP + diphosphate + H(+). Catalyzes the attachment of threonine to tRNA(Thr) in a two-step reaction: L-threonine is first activated by ATP to form Thr-AMP and then transferred to the acceptor end of tRNA(Thr). Also edits incorrectly charged L-seryl-tRNA(Thr). The chain is Threonine--tRNA ligase from Listeria monocytogenes serotype 4b (strain CLIP80459).